A 315-amino-acid polypeptide reads, in one-letter code: Aldo-keto reductase family 4 member C11 (315 aa).

Position 2 is an N-acetylalanine (Ala2). NADP(+) contacts are provided by residues 23-24 and Asp47; that span reads TW. The active-site Proton donor is the Tyr52. Residues His114, 158-159, Gln180, 207-213, 256-258, and 262-266 each bind NADP(+); these read SN, SPLGSPG, KST, and RIREN. Ser295 carries the post-translational modification Phosphoserine.

This sequence belongs to the aldo/keto reductase family.

In terms of biological role, oxidoreductase that may act on a broad range of substrates such as ketosteroids, aldehydes, ketones and sugars. The chain is Aldo-keto reductase family 4 member C11 (AKR4C11) from Arabidopsis thaliana (Mouse-ear cress).